A 255-amino-acid chain; its full sequence is Probable septum site-determining protein MinC (255 aa).

The segment covering 103–115 (SHGRRPRGERSEE) has biased composition (basic and acidic residues). Residues 103–136 (SHGRRPRGERSEEAAEAVPAAAEPVPAPAASPAP) are disordered. Over residues 127–136 (VPAPAASPAP) the composition is skewed to pro residues.

Belongs to the MinC family. In terms of assembly, interacts with MinD and FtsZ.

Cell division inhibitor that blocks the formation of polar Z ring septums. Rapidly oscillates between the poles of the cell to destabilize FtsZ filaments that have formed before they mature into polar Z rings. Prevents FtsZ polymerization. The sequence is that of Probable septum site-determining protein MinC from Ralstonia nicotianae (strain ATCC BAA-1114 / GMI1000) (Ralstonia solanacearum).